The sequence spans 341 residues: Phosphoribosylformylglycinamidine cyclo-ligase (341 aa).

The protein belongs to the AIR synthase family.

It localises to the cytoplasm. It catalyses the reaction 2-formamido-N(1)-(5-O-phospho-beta-D-ribosyl)acetamidine + ATP = 5-amino-1-(5-phospho-beta-D-ribosyl)imidazole + ADP + phosphate + H(+). Its pathway is purine metabolism; IMP biosynthesis via de novo pathway; 5-amino-1-(5-phospho-D-ribosyl)imidazole from N(2)-formyl-N(1)-(5-phospho-D-ribosyl)glycinamide: step 2/2. The polypeptide is Phosphoribosylformylglycinamidine cyclo-ligase (Xanthomonas campestris pv. campestris (strain 8004)).